A 583-amino-acid chain; its full sequence is uncharacterized protein (583 aa).

At serine 22 the chain carries Phosphoserine. 6 helical membrane passes run methionine 91–alanine 111, alanine 116–leucine 136, proline 159–leucine 179, isoleucine 194–glycine 214, phenylalanine 223–isoleucine 243, and valine 311–serine 331. The N-linked (GlcNAc...) asparagine glycan is linked to asparagine 340. Helical transmembrane passes span valine 364–alanine 384, proline 410–glycine 430, threonine 435–isoleucine 455, leucine 476–leucine 496, and phenylalanine 518–tyrosine 538.

This sequence belongs to the amino acid-polyamine-organocation (APC) superfamily.

It localises to the golgi apparatus membrane. The protein localises to the membrane. This is an uncharacterized protein from Schizosaccharomyces pombe (strain 972 / ATCC 24843) (Fission yeast).